The following is a 392-amino-acid chain: Probable nucleoredoxin 3 (392 aa).

Thioredoxin domains are found at residues 17–171 (LYSI…DSKR) and 177–326 (EKLL…ELKA).

It belongs to the nucleoredoxin family.

The enzyme catalyses [protein]-dithiol + NAD(+) = [protein]-disulfide + NADH + H(+). The catalysed reaction is [protein]-dithiol + NADP(+) = [protein]-disulfide + NADPH + H(+). Functionally, probable thiol-disulfide oxidoreductase that may participate in various redox reactions. The polypeptide is Probable nucleoredoxin 3 (Arabidopsis thaliana (Mouse-ear cress)).